We begin with the raw amino-acid sequence, 239 residues long: ATP-dependent dethiobiotin synthetase BioD (239 aa).

15 to 20 lines the ATP pocket; sequence EIGKTF. Residue Thr-19 coordinates Mg(2+). Lys-40 is an active-site residue. ATP contacts are provided by residues Asp-57, 118–121, 178–179, and 211–213; these read EGVG, NH, and AHL. Positions 57 and 118 each coordinate Mg(2+).

Belongs to the dethiobiotin synthetase family. In terms of assembly, homodimer. Mg(2+) serves as cofactor.

The protein localises to the cytoplasm. The enzyme catalyses (7R,8S)-7,8-diammoniononanoate + CO2 + ATP = (4R,5S)-dethiobiotin + ADP + phosphate + 3 H(+). Its pathway is cofactor biosynthesis; biotin biosynthesis; biotin from 7,8-diaminononanoate: step 1/2. Its function is as follows. Catalyzes a mechanistically unusual reaction, the ATP-dependent insertion of CO2 between the N7 and N8 nitrogen atoms of 7,8-diaminopelargonic acid (DAPA, also called 7,8-diammoniononanoate) to form a ureido ring. The protein is ATP-dependent dethiobiotin synthetase BioD of Burkholderia vietnamiensis (strain G4 / LMG 22486) (Burkholderia cepacia (strain R1808)).